Consider the following 179-residue polypeptide: Large ribosomal subunit protein uL5 (179 aa).

It belongs to the universal ribosomal protein uL5 family. In terms of assembly, part of the 50S ribosomal subunit; part of the 5S rRNA/L5/L18/L25 subcomplex. Contacts the 5S rRNA and the P site tRNA. Forms a bridge to the 30S subunit in the 70S ribosome.

Functionally, this is one of the proteins that bind and probably mediate the attachment of the 5S RNA into the large ribosomal subunit, where it forms part of the central protuberance. In the 70S ribosome it contacts protein S13 of the 30S subunit (bridge B1b), connecting the 2 subunits; this bridge is implicated in subunit movement. Contacts the P site tRNA; the 5S rRNA and some of its associated proteins might help stabilize positioning of ribosome-bound tRNAs. The protein is Large ribosomal subunit protein uL5 of Macrococcus caseolyticus (strain JCSC5402) (Macrococcoides caseolyticum).